The chain runs to 1416 residues: DNA-directed RNA polymerase subunit beta' (1416 aa).

Residues Cys-71, Cys-73, Cys-86, and Cys-89 each coordinate Zn(2+). Residues Asp-461, Asp-463, and Asp-465 each contribute to the Mg(2+) site. Zn(2+)-binding residues include Cys-815, Cys-889, Cys-896, and Cys-899.

The protein belongs to the RNA polymerase beta' chain family. The RNAP catalytic core consists of 2 alpha, 1 beta, 1 beta' and 1 omega subunit. When a sigma factor is associated with the core the holoenzyme is formed, which can initiate transcription. Requires Mg(2+) as cofactor. The cofactor is Zn(2+).

It catalyses the reaction RNA(n) + a ribonucleoside 5'-triphosphate = RNA(n+1) + diphosphate. In terms of biological role, DNA-dependent RNA polymerase catalyzes the transcription of DNA into RNA using the four ribonucleoside triphosphates as substrates. This is DNA-directed RNA polymerase subunit beta' from Haemophilus influenzae (strain PittEE).